Reading from the N-terminus, the 236-residue chain is Phosphoribosylaminoimidazole-succinocarboxamide synthase (236 aa).

Belongs to the SAICAR synthetase family.

It catalyses the reaction 5-amino-1-(5-phospho-D-ribosyl)imidazole-4-carboxylate + L-aspartate + ATP = (2S)-2-[5-amino-1-(5-phospho-beta-D-ribosyl)imidazole-4-carboxamido]succinate + ADP + phosphate + 2 H(+). It functions in the pathway purine metabolism; IMP biosynthesis via de novo pathway; 5-amino-1-(5-phospho-D-ribosyl)imidazole-4-carboxamide from 5-amino-1-(5-phospho-D-ribosyl)imidazole-4-carboxylate: step 1/2. The sequence is that of Phosphoribosylaminoimidazole-succinocarboxamide synthase from Chlorobium phaeobacteroides (strain BS1).